The chain runs to 169 residues: Peptide methionine sulfoxide reductase MsrA (169 aa).

Cysteine 10 is a catalytic residue.

It belongs to the MsrA Met sulfoxide reductase family.

The enzyme catalyses L-methionyl-[protein] + [thioredoxin]-disulfide + H2O = L-methionyl-(S)-S-oxide-[protein] + [thioredoxin]-dithiol. It catalyses the reaction [thioredoxin]-disulfide + L-methionine + H2O = L-methionine (S)-S-oxide + [thioredoxin]-dithiol. Functionally, has an important function as a repair enzyme for proteins that have been inactivated by oxidation. Catalyzes the reversible oxidation-reduction of methionine sulfoxide in proteins to methionine. This is Peptide methionine sulfoxide reductase MsrA from Streptococcus equi subsp. zooepidemicus (strain H70).